A 398-amino-acid chain; its full sequence is Bone morphogenetic protein 2-B (398 aa).

The first 23 residues, 1–23, serve as a signal peptide directing secretion; that stretch reads MVAGIHSLLLLQFYQILLSGCTG. The propeptide occupies 24-284; the sequence is LVPEEGKRKY…GHALHKRQKR (261 aa). Asn-137, Asn-202, Asn-237, and Asn-340 each carry an N-linked (GlcNAc...) asparagine glycan. Cystine bridges form between Cys-298-Cys-363, Cys-327-Cys-395, and Cys-331-Cys-397.

This sequence belongs to the TGF-beta family. In terms of assembly, homodimer; disulfide-linked.

The protein resides in the secreted. Induces cartilage and bone formation. In Xenopus laevis (African clawed frog), this protein is Bone morphogenetic protein 2-B (bmp2-b).